The following is a 319-amino-acid chain: tRNA uridine(34) hydroxylase (319 aa).

Residues 125-219 (LDENTVVIDA…YGKDPEVQGD (95 aa)) enclose the Rhodanese domain. C179 serves as the catalytic Cysteine persulfide intermediate.

Belongs to the TrhO family.

It carries out the reaction uridine(34) in tRNA + AH2 + O2 = 5-hydroxyuridine(34) in tRNA + A + H2O. Catalyzes oxygen-dependent 5-hydroxyuridine (ho5U) modification at position 34 in tRNAs. The sequence is that of tRNA uridine(34) hydroxylase from Lactococcus lactis subsp. lactis (strain IL1403) (Streptococcus lactis).